The following is a 251-amino-acid chain: Imidazole glycerol phosphate synthase subunit HisF (251 aa).

Active-site residues include D11 and D130.

It belongs to the HisA/HisF family. In terms of assembly, heterodimer of HisH and HisF.

The protein localises to the cytoplasm. It catalyses the reaction 5-[(5-phospho-1-deoxy-D-ribulos-1-ylimino)methylamino]-1-(5-phospho-beta-D-ribosyl)imidazole-4-carboxamide + L-glutamine = D-erythro-1-(imidazol-4-yl)glycerol 3-phosphate + 5-amino-1-(5-phospho-beta-D-ribosyl)imidazole-4-carboxamide + L-glutamate + H(+). The protein operates within amino-acid biosynthesis; L-histidine biosynthesis; L-histidine from 5-phospho-alpha-D-ribose 1-diphosphate: step 5/9. In terms of biological role, IGPS catalyzes the conversion of PRFAR and glutamine to IGP, AICAR and glutamate. The HisF subunit catalyzes the cyclization activity that produces IGP and AICAR from PRFAR using the ammonia provided by the HisH subunit. This is Imidazole glycerol phosphate synthase subunit HisF from Flavobacterium psychrophilum (strain ATCC 49511 / DSM 21280 / CIP 103535 / JIP02/86).